Here is a 346-residue protein sequence, read N- to C-terminus: Acrosin (346 aa).

The N-terminal stretch at 1-19 is a signal peptide; the sequence is MALLLPLAVLLAACRPGHG. Cystine bridges form between Cys-24–Cys-146, Cys-27–Cys-154, Cys-70–Cys-86, Cys-168–Cys-240, Cys-203–Cys-219, and Cys-230–Cys-260. A Peptidase S1 domain is found at 41 to 284; that stretch reads VVGGTEALHG…FYNWILLQVR (244 aa). His-85 functions as the Charge relay system in the catalytic mechanism. Asn-128 carries an N-linked (GlcNAc...) asparagine glycan. Asp-134 functions as the Charge relay system in the catalytic mechanism. Asn-204 is a glycosylation site (N-linked (GlcNAc...) asparagine). The active-site Charge relay system is the Ser-234. The propeptide occupies 266–346; the sequence is PGIYTSTQHF…LLQSLWGSKA (81 aa).

This sequence belongs to the peptidase S1 family. As to quaternary structure, heavy chain (catalytic) and a light chain linked by two disulfide bonds. In terms of processing, glycosylated.

It carries out the reaction Preferential cleavage: Arg-|-Xaa, Lys-|-Xaa.. With respect to regulation, inhibited by aprotinin, ovomucoid, soybean trypsin inhibitor, benzamidine, p-aminobenzamidine, and zinc ions. Activity also inhibited by a Kazal-type proteinase inhibitor. Its function is as follows. Serine protease of trypsin-like cleavage specificity. Synthesized in a zymogen form, proacrosin and stored in the acrosome. This chain is Acrosin, found in Meleagris gallopavo (Wild turkey).